We begin with the raw amino-acid sequence, 247 residues long: Triosephosphate isomerase (247 aa).

Substrate contacts are provided by asparagine 10 and lysine 12. Histidine 94 functions as the Electrophile in the catalytic mechanism. Catalysis depends on glutamate 164, which acts as the Proton acceptor.

It belongs to the triosephosphate isomerase family. Homodimer.

It localises to the cytoplasm. It carries out the reaction D-glyceraldehyde 3-phosphate = dihydroxyacetone phosphate. The enzyme catalyses dihydroxyacetone phosphate = methylglyoxal + phosphate. It functions in the pathway carbohydrate biosynthesis; gluconeogenesis. Its pathway is carbohydrate degradation; glycolysis; D-glyceraldehyde 3-phosphate from glycerone phosphate: step 1/1. In terms of biological role, triosephosphate isomerase is an extremely efficient metabolic enzyme that catalyzes the interconversion between dihydroxyacetone phosphate (DHAP) and D-glyceraldehyde-3-phosphate (G3P) in glycolysis and gluconeogenesis. Its function is as follows. It is also responsible for the non-negligible production of methylglyoxal a reactive cytotoxic side-product that modifies and can alter proteins, DNA and lipids. The polypeptide is Triosephosphate isomerase (Latimeria chalumnae (Coelacanth)).